Here is a 611-residue protein sequence, read N- to C-terminus: Glutamine--fructose-6-phosphate aminotransferase [isomerizing] (611 aa).

Cys-2 functions as the Nucleophile; for GATase activity in the catalytic mechanism. The Glutamine amidotransferase type-2 domain occupies 2-219; sequence CGIVGGVSKT…DGDVAMLQRQ (218 aa). 2 SIS domains span residues 287–427 and 460–601; these read AAAM…APGA and WAAR…VDRP. Catalysis depends on Lys-606, which acts as the For Fru-6P isomerization activity.

Homodimer.

It is found in the cytoplasm. It catalyses the reaction D-fructose 6-phosphate + L-glutamine = D-glucosamine 6-phosphate + L-glutamate. Catalyzes the first step in hexosamine metabolism, converting fructose-6P into glucosamine-6P using glutamine as a nitrogen source. The sequence is that of Glutamine--fructose-6-phosphate aminotransferase [isomerizing] from Acidithiobacillus ferridurans.